We begin with the raw amino-acid sequence, 450 residues long: Phosphoglucosamine mutase (450 aa).

S101 acts as the Phosphoserine intermediate in catalysis. Residues S101, D240, D242, and D244 each contribute to the Mg(2+) site. Residue S101 is modified to Phosphoserine.

The protein belongs to the phosphohexose mutase family. Mg(2+) is required as a cofactor. In terms of processing, activated by phosphorylation.

It catalyses the reaction alpha-D-glucosamine 1-phosphate = D-glucosamine 6-phosphate. In terms of biological role, catalyzes the conversion of glucosamine-6-phosphate to glucosamine-1-phosphate. The polypeptide is Phosphoglucosamine mutase (Streptococcus equi subsp. zooepidemicus (strain MGCS10565)).